A 982-amino-acid chain; its full sequence is Ubiquitin carboxyl-terminal hydrolase 37 (982 aa).

The KEN box 1 signature appears at 32–34 (KEN). Short sequence motifs (D-box) lie at residues 71-79 (RLMLTLQDN) and 96-105 (RLFLDAVHQN). Serine 115 is modified (phosphoserine). Residues 128-162 (RTSQKETHRQLSYSDNQVSSKRGSLETKDDIPFRK) form a disordered region. Over residues 137-149 (QLSYSDNQVSSKR) the composition is skewed to polar residues. The span at 150–160 (GSLETKDDIPF) shows a compositional bias: basic and acidic residues. A D-box 3 motif is present at residues 161-169 (RKVLGNPGR). Phosphoserine is present on serine 171. A compositionally biased stretch (low complexity) spans 183-201 (TRTIPSLTSTSTPLRSGLL). The disordered stretch occupies residues 183-307 (TRTIPSLTST…TPSAKRSLGF (125 aa)). Serine 213 is subject to Phosphoserine. The KEN box 2 motif lies at 224–226 (KEN). A compositionally biased stretch (basic and acidic residues) spans 246-260 (SREKQLSLKQSEENR). The span at 282 to 301 (YSPSSTNLDRTNISSQTPSA) shows a compositional bias: polar residues. Residues 343–954 (QGFSNLGNTC…SGYIFFYMHK (612 aa)) enclose the USP domain. The active-site Nucleophile is the cysteine 352. At serine 631 the chain carries Phosphoserine; by CDK2. Phosphoserine is present on residues serine 653 and serine 655. Disordered stretches follow at residues 672-705 (ISSS…GFDA) and 720-798 (KREA…GEVD). Composition is skewed to basic and acidic residues over residues 684–698 (KDSK…KSEL) and 720–735 (KREA…DDKP). Residues 707-726 (SEEELLAAVLEISKREASPS) form the UIM 1 domain. Serine 773 is modified (phosphoserine). Residues 777–789 (ITKDCDENKENKT) show a composition bias toward basic and acidic residues. Residues 785–787 (KEN) carry the KEN box 3 motif. UIM domains lie at 809 to 828 (REEQ…QEAW) and 831 to 850 (KEDD…FNNS). The Proton acceptor role is filled by histidine 909.

The protein belongs to the peptidase C19 family. Interacts with FZR1/CDH1. Interacts with CDT1. Post-translationally, polyubiquitinated via 'Lys-11'-linked ubiquitin by the APC(CDH1) complex during late mitosis, leading to its degradation. Able to mediate auto-deubiquitination. In terms of processing, phosphorylated at Ser-631 by CDK2 during G1/S phase but not during mitosis; phosphorylation at Ser-631 is required for deubiquitinase activity. Also polyubiquitinated during early G1 phase, without leading to degradation. Phosphorylated at Ser-115 by ATM following DNA damage, which in turn increases its deubiquitination activity towards BLM.

Its subcellular location is the nucleus. It is found in the chromosome. The enzyme catalyses Thiol-dependent hydrolysis of ester, thioester, amide, peptide and isopeptide bonds formed by the C-terminal Gly of ubiquitin (a 76-residue protein attached to proteins as an intracellular targeting signal).. In terms of biological role, deubiquitinase that plays a role in different processes including cell cycle regulation, DNA replication or DNA damage response. Antagonizes the anaphase-promoting complex (APC/C) during G1/S transition by mediating deubiquitination of cyclin-A (CCNA1 and CCNA2), thereby promoting S phase entry. Specifically mediates deubiquitination of 'Lys-11'-linked polyubiquitin chains, a specific ubiquitin-linkage type mediated by the APC/C complex. Phosphorylation at Ser-628 during G1/S phase maximizes the deubiquitinase activity, leading to prevent degradation of cyclin-A (CCNA1 and CCNA2). Plays an important role in the regulation of DNA replication by stabilizing the licensing factor CDT1. Also plays an essential role beyond S-phase entry to promote the efficiency and fidelity of replication by deubiquitinating checkpoint kinase 1/CHK1, promoting its stability. Sustains the DNA damage response (DDR) by deubiquitinating and stabilizing the ATP-dependent DNA helicase BLM. Mechanistically, DNA double-strand breaks (DSB) promotes ATM-mediated phosphorylation of USP37 and enhances the binding between USP37 and BLM. Promotes cell migration by deubiquitinating and stabilizing the epithelial-mesenchymal transition (EMT)-inducing transcription factor SNAI. Plays a role in the regulation of mitotic spindle assembly and mitotic progression by associating with chromatin-associated WAPL and stabilizing it through deubiquitination. This is Ubiquitin carboxyl-terminal hydrolase 37 (USP37) from Sus scrofa (Pig).